Consider the following 40-residue polypeptide: Photosystem II reaction center protein J (40 aa).

A helical membrane pass occupies residues 8 to 28; it reads IPLWIVGTVTGILVIGLIGVF.

It belongs to the PsbJ family. In terms of assembly, PSII is composed of 1 copy each of membrane proteins PsbA, PsbB, PsbC, PsbD, PsbE, PsbF, PsbH, PsbI, PsbJ, PsbK, PsbL, PsbM, PsbT, PsbX, PsbY, PsbZ, Psb30/Ycf12, at least 3 peripheral proteins of the oxygen-evolving complex and a large number of cofactors. It forms dimeric complexes.

Its subcellular location is the plastid. It localises to the chloroplast thylakoid membrane. Its function is as follows. One of the components of the core complex of photosystem II (PSII). PSII is a light-driven water:plastoquinone oxidoreductase that uses light energy to abstract electrons from H(2)O, generating O(2) and a proton gradient subsequently used for ATP formation. It consists of a core antenna complex that captures photons, and an electron transfer chain that converts photonic excitation into a charge separation. This Coffea arabica (Arabian coffee) protein is Photosystem II reaction center protein J.